A 285-amino-acid chain; its full sequence is PHO85 cyclin-7 (285 aa).

Residues 1–14 are compositionally biased toward low complexity; that stretch reads MELSSPSKKTTTSP. The segment at 1-42 is disordered; it reads MELSSPSKKTTTSPINIPGGNRDNLIIGPHSHSFKTDPFSSN. At S69 the chain carries Phosphoserine.

Belongs to the cyclin family. PHO80 subfamily. In terms of assembly, forms a cyclin-CDK complex with PHO85. Interacts with the substrate proteins MMR1 and YJL084C. Interacts with the CDK inhibitor (CKI) PHO81.

The protein resides in the cytoplasm. Its activity is regulated as follows. The PCL7-PHO85 cyclin-CDK is inhibited by PHO81 in low-phosphate conditions. Functionally, cyclin partner of the cyclin-dependent kinase (CDK) PHO85. Together with cyclin PCL6, controls glycogen phosphorylase and glycogen synthase activities in response to nutrient availablility. The PCL7-PHO85 cyclin-CDK holoenzyme has GLC8 kinase activity and phosphorylates and inactivates the phosphatase PP1-2 inhibitor GLC8, causing activation of PP1-2, which then dephosphorylates and activates glycogen phosphorylase. PCL7-PHO85 also phosphorylates MMR1 and YJL084C. This Saccharomyces cerevisiae (strain ATCC 204508 / S288c) (Baker's yeast) protein is PHO85 cyclin-7 (PCL7).